The sequence spans 150 residues: Large ribosomal subunit protein bL9 (150 aa).

It belongs to the bacterial ribosomal protein bL9 family.

Functionally, binds to the 23S rRNA. The chain is Large ribosomal subunit protein bL9 from Corynebacterium efficiens (strain DSM 44549 / YS-314 / AJ 12310 / JCM 11189 / NBRC 100395).